We begin with the raw amino-acid sequence, 207 residues long: Strobilurin A biosynthesis cluster protein r1 (207 aa).

2 helical membrane-spanning segments follow: residues 108–128 (FIFP…LLYL) and 169–189 (NLTT…PFWI).

The protein localises to the membrane. The protein operates within mycotoxin biosynthesis. Part of the gene cluster that mediates the biosynthesis of strobilurin A, an antifungal polyketide that contains a key beta-methoxyacrylate toxophore that targets the complex III of the mitochondrial electron transport chain. Strobilurin biosynthesis begins with construction of benzoyl CoA by step-wise elimination of ammonia from phenylalanine by the phenylalanine ammonia-lyase str11, oxygenation by str8 and retro-Claisen reaction to form benzoic acid, which is activated to its CoA thiolester benzoyl CoA by the dedicated CoA ligase str10. Benzoyl CoA forms the starter unit for the highly reducing polyketide synthase stpks1 that produces the polyketide prestrobilutin A. The FAD-dependent oxygenase str9 then catalyzes the key oxidative rearrangement responsible for the creation of the beta-methoxyacrylate toxophore. Str9 performs epoxidation of the 2,3 olefin of prestrobilutin A, followed by Meinwald rearrangement to furnish the aldehyde intermediate. Rapid enolization of the aldehyde intermediate would give the beta-methoxyacrylate skeleton and methylations catalyzed by str2 and str3 complete the synthesis and lead to the production of strobilurin A. The short-chain dehydrogenase stl2 and the dehydrogenase str4 play a role in the shunt pathway leading to the production of bolineol. The cluster encodes no obvious halogenase gene that could be involved in production of strobilurin B, nor any obvious dimethylallyl-transferase that could be involved in the production of strobilurin G. It is possible that unknown proteins encoded in, or near, the cluster (such as str1 or stl1) may form new classes of halogenases or dimethylally-transferases, or that the responsible genes are located elsewhere on the genome. Similarly, proteins encoded by str5/str6 hydrolases appear to have no chemical role in the biosynthesis of strobilurin A. Finally, no obvious self-resistance gene is found within the cluster. This is Strobilurin A biosynthesis cluster protein r1 from Strobilurus tenacellus.